Reading from the N-terminus, the 303-residue chain is Movement protein (303 aa).

Positions 272 to 302 form a coiled coil; the sequence is PPKRDFELTETSKLKSMISDLTQKVVNLDKK.

This sequence belongs to the caulimoviridae movement protein family. Homotrimer, through the coiled-coil domain. Interacts with VAP.

The protein resides in the host cell junction. The protein localises to the host plasmodesma. Transports viral genome to neighboring plant cells directly through plasmosdesmata, without any budding. The movement protein allows efficient cell to cell propagation, by bypassing the host cell wall barrier. Acts by forming tubules structures that increase the size exclusion limit (SEL) of plasmodesmata, thereby allowing viral ribonucleocapsids to spread directly to neighboring cells. This Soybean chlorotic mottle virus protein is Movement protein.